The primary structure comprises 401 residues: Calreticulin (401 aa).

An N-terminal signal peptide occupies residues 1–18; sequence MRKELWLGLLLSSQAVLS. An intrachain disulfide couples cysteine 103 to cysteine 134. Residues tyrosine 107, lysine 109, tyrosine 125, and aspartate 132 each coordinate an alpha-D-glucoside. 7 consecutive repeat copies span residues 187–198, 206–217, 223–234, 241–252, 256–266, 270–280, and 284–294. The 4 X approximate repeats stretch occupies residues 187-252; it reads KESGTLEEDW…DATQPDDWDE (66 aa). Composition is skewed to basic and acidic residues over residues 199-214 and 224-236; these read LKPK…KPAD and PEDK…DKEP. Residues 199–263 are disordered; it reads LKPKTIPDPE…EDGKWEAPMI (65 aa). Acidic residues predominate over residues 246–256; sequence QPDDWDEEEDG. The tract at residues 256–294 is 3 X approximate repeats; that stretch reads GKWEAPMISNPKYKGEWKAKKIPNPAYKGVWKPRDIPNP. An alpha-D-glucoside is bound at residue aspartate 314. The interval 341-401 is disordered; sequence DQTNGATKDA…EEEDDKKDEL (61 aa). Residues 348 to 381 show a composition bias toward basic and acidic residues; the sequence is KDAEKKAFDSAEADKRKKEEDERKKQEEEEKKTA. A compositionally biased stretch (acidic residues) spans 382-401; sequence EEDEDDDDEEEEEDDKKDEL. The Prevents secretion from ER motif lies at 398-401; it reads KDEL.

Belongs to the calreticulin family.

The protein resides in the endoplasmic reticulum lumen. Molecular calcium-binding chaperone promoting folding, oligomeric assembly and quality control in the ER via the calreticulin/calnexin cycle. This lectin may interact transiently with almost all of the monoglucosylated glycoproteins that are synthesized in the ER. The polypeptide is Calreticulin (Euglena gracilis).